Consider the following 327-residue polypeptide: Golgi to ER traffic protein 4 homolog (327 aa).

Ala-2 is modified (N-acetylalanine). Residue Ser-12 is modified to Phosphoserine. The interval 195–271 (FVAQAVLQFL…YQPSLRRDPM (77 aa)) is interacts with BAG6. Residues 307–327 (GSSEQEDGEESPSDGSPIELD) are disordered.

This sequence belongs to the GET4 family. In terms of assembly, component of the BAG6/BAT3 complex, at least composed of BAG6, UBL4A and GET4/TRC35. Interacts with BAG6; the interaction is direct and localizes BAG6 to the cytosol. Interacts with GET3. Ubiquitinated by RNF12, leading to proteasomal degradation. When unassembled from BAG6; ubiquitinylation is modulated by BAG6 quality control role and effectuated by RNF126.

It is found in the cytoplasm. The protein localises to the cytosol. Its function is as follows. As part of a cytosolic protein quality control complex, the BAG6/BAT3 complex, maintains misfolded and hydrophobic patches-containing proteins in a soluble state and participates in their proper delivery to the endoplasmic reticulum or alternatively can promote their sorting to the proteasome where they undergo degradation. The BAG6/BAT3 complex is involved in the post-translational delivery of tail-anchored/type II transmembrane proteins to the endoplasmic reticulum membrane. Recruited to ribosomes, it interacts with the transmembrane region of newly synthesized tail-anchored proteins and together with SGTA and ASNA1 mediates their delivery to the endoplasmic reticulum. Client proteins that cannot be properly delivered to the endoplasmic reticulum are ubiquitinated and sorted to the proteasome. Similarly, the BAG6/BAT3 complex also functions as a sorting platform for proteins of the secretory pathway that are mislocalized to the cytosol either delivering them to the proteasome for degradation or to the endoplasmic reticulum. The BAG6/BAT3 complex also plays a role in the endoplasmic reticulum-associated degradation (ERAD), a quality control mechanism that eliminates unwanted proteins of the endoplasmic reticulum through their retrotranslocation to the cytosol and their targeting to the proteasome. It maintains these retrotranslocated proteins in an unfolded yet soluble state condition in the cytosol to ensure their proper delivery to the proteasome. The chain is Golgi to ER traffic protein 4 homolog from Homo sapiens (Human).